The following is a 156-amino-acid chain: Acyl carrier protein, mitochondrial (156 aa).

Residues 1 to 68 (MAVRVLCACV…GRVTQLCRQY (68 aa)) constitute a mitochondrion transit peptide. The region spanning 77-152 (EGIKDRVLYV…EIVDYIADKK (76 aa)) is the Carrier domain. Position 88 is an N6-acetyllysine (K88). S112 is modified (O-(pantetheine 4'-phosphoryl)serine).

As to quaternary structure, mammalian complex I is composed of 45 different subunits. Interacts with ETFRF1. Identified in a complex composed of MALSU1, MIEF1 upstream open reading frame protein and NDUFAB1; within the trimeric complex MIEF1 upstream open reading frame protein functions as a bridging scaffold that interacts with MALSU1 on one side, and with NDUFAB1 on the other side. The complex interacts with the mitochondrial large ribosomal subunit. Interacts with alpha-1-microglobulin chain; this interaction is required for the maintenance of mitochondrial redox homeostasis. Component of the mitochondrial core iron-sulfur cluster (ISC) complex composed of NFS1, LYRM4, NDUFAB1, ISCU, FXN, and FDX2; this complex is a heterohexamer containing two copies of each monomer. Component of the cyteine desulfurase complex composed of NFS1, LYRM4 and NDUFAB1; this complex contributes to the stability and cysteine desulfurase activity of NFS1. Post-translationally, phosphopantetheinylation at Ser-112 is essential for interactions with LYR motif-containing proteins.

It is found in the mitochondrion. Carrier of the growing fatty acid chain in fatty acid biosynthesis. Accessory and non-catalytic subunit of the mitochondrial membrane respiratory chain NADH dehydrogenase (Complex I), which functions in the transfer of electrons from NADH to the respiratory chain. Accessory protein, of the core iron-sulfur cluster (ISC) assembly complex, that regulates, in association with LYRM4, the stability and the cysteine desulfurase activity of NFS1 and participates in the [2Fe-2S] clusters assembly on the scaffolding protein ISCU. The core iron-sulfur cluster (ISC) assembly complex is involved in the de novo synthesis of a [2Fe-2S] cluster, the first step of the mitochondrial iron-sulfur protein biogenesis. This process is initiated by the cysteine desulfurase complex (NFS1:LYRM4:NDUFAB1) that produces persulfide which is delivered on the scaffold protein ISCU in a FXN-dependent manner. Then this complex is stabilized by FDX2 which provides reducing equivalents to accomplish the [2Fe-2S] cluster assembly. Finally, the [2Fe-2S] cluster is transferred from ISCU to chaperone proteins, including HSCB, HSPA9 and GLRX5. The polypeptide is Acyl carrier protein, mitochondrial (Bos taurus (Bovine)).